The chain runs to 92 residues: Late cornified envelope protein 3E (92 aa).

Over residues 1–10 (MSCQQNQKQC) the composition is skewed to low complexity. 2 disordered regions span residues 1 to 22 (MSCQ…PKCP) and 64 to 92 (RRQR…GGCC). The span at 11-22 (QPPPKCPSPKCP) shows a compositional bias: pro residues. Residues 76–92 (GQQGGGSGCCHGSGGCC) show a composition bias toward gly residues.

This sequence belongs to the LCE family. As to quaternary structure, interacts with CYSRT1. As to expression, skin-specific. Expression was readily detected in adult trunk skin, adult arm skin, fetal skin, penal skin, vulva, esophagus and tongue. Not expressed in the cervix, rectum, lung, colon, or placenta.

In terms of biological role, precursors of the cornified envelope of the stratum corneum. The chain is Late cornified envelope protein 3E (LCE3E) from Homo sapiens (Human).